The primary structure comprises 420 residues: UDP-N-acetyl-D-mannosamine dehydrogenase (420 aa).

The NAD(+) site is built by Y13, I14, D33, T85, and T126. UDP-N-acetyl-alpha-D-mannosaminouronate is bound by residues R160, V161, K212, N216, R219, H250, R252, and G263. The Proton donor/acceptor role is filled by K212. The Nucleophile role is filled by C266. UDP-N-acetyl-alpha-D-mannosaminouronate-binding residues include F330 and K331. R338 serves as a coordination point for NAD(+). K416 contributes to the UDP-N-acetyl-alpha-D-mannosaminouronate binding site.

It belongs to the UDP-glucose/GDP-mannose dehydrogenase family. WecC subfamily. In terms of assembly, homodimer.

The catalysed reaction is UDP-N-acetyl-alpha-D-mannosamine + 2 NAD(+) + H2O = UDP-N-acetyl-alpha-D-mannosaminouronate + 2 NADH + 3 H(+). The protein operates within bacterial outer membrane biogenesis; enterobacterial common antigen biosynthesis. Catalyzes the four-electron oxidation of UDP-N-acetyl-D-mannosamine (UDP-ManNAc), reducing NAD(+) and releasing UDP-N-acetylmannosaminuronic acid (UDP-ManNAcA). The sequence is that of UDP-N-acetyl-D-mannosamine dehydrogenase from Yersinia pestis.